Reading from the N-terminus, the 572-residue chain is Dihydroxy-acid dehydratase (572 aa).

Cysteine 57 is a [2Fe-2S] cluster binding site. Aspartate 89 serves as a coordination point for Mg(2+). A [2Fe-2S] cluster-binding site is contributed by cysteine 130. Aspartate 131 and lysine 132 together coordinate Mg(2+). N6-carboxylysine is present on lysine 132. Residue cysteine 202 coordinates [2Fe-2S] cluster. A Mg(2+)-binding site is contributed by glutamate 453. Serine 479 serves as the catalytic Proton acceptor.

This sequence belongs to the IlvD/Edd family. Homodimer. The cofactor is [2Fe-2S] cluster. It depends on Mg(2+) as a cofactor.

The enzyme catalyses (2R)-2,3-dihydroxy-3-methylbutanoate = 3-methyl-2-oxobutanoate + H2O. The catalysed reaction is (2R,3R)-2,3-dihydroxy-3-methylpentanoate = (S)-3-methyl-2-oxopentanoate + H2O. Its pathway is amino-acid biosynthesis; L-isoleucine biosynthesis; L-isoleucine from 2-oxobutanoate: step 3/4. It functions in the pathway amino-acid biosynthesis; L-valine biosynthesis; L-valine from pyruvate: step 3/4. Its function is as follows. Functions in the biosynthesis of branched-chain amino acids. Catalyzes the dehydration of (2R,3R)-2,3-dihydroxy-3-methylpentanoate (2,3-dihydroxy-3-methylvalerate) into 2-oxo-3-methylpentanoate (2-oxo-3-methylvalerate) and of (2R)-2,3-dihydroxy-3-methylbutanoate (2,3-dihydroxyisovalerate) into 2-oxo-3-methylbutanoate (2-oxoisovalerate), the penultimate precursor to L-isoleucine and L-valine, respectively. This is Dihydroxy-acid dehydratase from Streptococcus sanguinis (strain SK36).